Here is a 418-residue protein sequence, read N- to C-terminus: Voltage-gated ClC-type chloride channel ClcB (418 aa).

Helical transmembrane passes span 5–25, 54–74, 146–166, 168–188, 222–242, 258–278, 291–311, 316–336, 352–372, and 380–400; these read LLIA…FRHA, LLTP…WQKF, LWIA…PLAG, LFIA…PVII, ALII…LTLM, WQLA…PAVW, APPL…AVLA, GAPG…GMLY, LLLG…APIM, and MTGE…ASVI.

This sequence belongs to the chloride channel (TC 2.A.49) family. ClcB subfamily.

The protein localises to the cell inner membrane. In terms of biological role, probably acts as an electrical shunt for an outwardly-directed proton pump that is linked to amino acid decarboxylation, as part of the extreme acid resistance (XAR) response. In Shigella boydii serotype 18 (strain CDC 3083-94 / BS512), this protein is Voltage-gated ClC-type chloride channel ClcB.